A 430-amino-acid chain; its full sequence is Adenylosuccinate synthetase (430 aa).

GTP contacts are provided by residues 12–18 and 40–42; these read GDEGKGK and GHT. The active-site Proton acceptor is the aspartate 13. Residues aspartate 13 and glycine 40 each contribute to the Mg(2+) site. IMP contacts are provided by residues 13–16, 38–41, threonine 128, arginine 142, glutamine 223, threonine 238, and arginine 302; these read DEGK and NAGH. Histidine 41 acts as the Proton donor in catalysis. Residue 298–304 coordinates substrate; that stretch reads TTTGRPR. GTP is bound by residues arginine 304, 330–332, and 412–414; these read SID and SVG.

The protein belongs to the adenylosuccinate synthetase family. Homodimer. Mg(2+) serves as cofactor.

It is found in the cytoplasm. The catalysed reaction is IMP + L-aspartate + GTP = N(6)-(1,2-dicarboxyethyl)-AMP + GDP + phosphate + 2 H(+). It participates in purine metabolism; AMP biosynthesis via de novo pathway; AMP from IMP: step 1/2. Its function is as follows. Plays an important role in the de novo pathway of purine nucleotide biosynthesis. Catalyzes the first committed step in the biosynthesis of AMP from IMP. The chain is Adenylosuccinate synthetase from Streptococcus agalactiae serotype Ia (strain ATCC 27591 / A909 / CDC SS700).